The primary structure comprises 489 residues: MTHPAQFINGQWSQGQGTEFSSVNPANNNVIFQANSATAEQVDAAVSAAREAFYAWADKTFAERLEIVKAFAAQLKENSEELAITIAQETGKPLWETRTEAGAMVGKIAISEKAFLERTGDVENAMPLGRAMIRHKPHGVVAVFGPYNFPGHLPNGHIVPALLAGNTVIFKPSELTPKVAELTLKLWEKAGLPAGVINLVQGEVATGKALAAHKGIDGLFFTGSSRTGHILHEQFAGQPGKILALEMGGNNPLIITDVEDTKAVVHDIIQSAFISSGQRCTCARKLFLPTGSKGDVILERLITATKAIKVGNYDDADQPFMGSMISSAAAAGMVKAQNELVELGAQVLVELEHTVNTGFVTPGIIECTNISDFPDEEHFGPLLKVFRFDDFDQAIDKANDTSFGLSAGLLSDSAADYEHFLRRIRAGIVNWNRPITGASSAAPFGGIGASGNHRASAYYAADYCAYPVASVELEKVAMPATLSPGLKID.

Position 223-228 (223-228 (GSSRTG)) interacts with NAD(+). Residues glutamate 246 and cysteine 280 contribute to the active site.

Belongs to the aldehyde dehydrogenase family. AstD subfamily.

The catalysed reaction is N-succinyl-L-glutamate 5-semialdehyde + NAD(+) + H2O = N-succinyl-L-glutamate + NADH + 2 H(+). It functions in the pathway amino-acid degradation; L-arginine degradation via AST pathway; L-glutamate and succinate from L-arginine: step 4/5. Its function is as follows. Catalyzes the NAD-dependent reduction of succinylglutamate semialdehyde into succinylglutamate. The sequence is that of N-succinylglutamate 5-semialdehyde dehydrogenase 1 from Pseudoalteromonas translucida (strain TAC 125).